Reading from the N-terminus, the 288-residue chain is Undecaprenyl-diphosphatase (288 aa).

8 consecutive transmembrane segments (helical) span residues 25 to 45 (GITEWLPISSTGHLILVNEFL), 53 to 73 (FIDMFNIVMHLGAILAVMVIY), 93 to 113 (WKLWLKVVIACIPSAFFGLLL), 121 to 141 (LSNFFVVAIMLVVYGIAFIWI), 171 to 191 (VLSIIPGTSRSGATILGGIIV), 196 to 216 (SVAADFTFFLGIPTMFGYSGL), 231 to 251 (GQAAILLVASVTAFLVSLFVI), and 263 to 283 (FTVFGKYRIVLGIIVLFYGAV).

This sequence belongs to the UppP family.

It is found in the cell membrane. It carries out the reaction di-trans,octa-cis-undecaprenyl diphosphate + H2O = di-trans,octa-cis-undecaprenyl phosphate + phosphate + H(+). Functionally, catalyzes the dephosphorylation of undecaprenyl diphosphate (UPP). Confers resistance to bacitracin. The protein is Undecaprenyl-diphosphatase of Streptococcus thermophilus (strain CNRZ 1066).